A 513-amino-acid polypeptide reads, in one-letter code: uncharacterized protein (513 aa).

Residues 1 to 48 form a disordered region; it reads MGSSEEQSVPGDDFYEESGDLNTGLSLVLRPAKSNEGESSLSSPKGSK. Residues 37–48 are compositionally biased toward polar residues; it reads GESSLSSPKGSK. 3 positions are modified to phosphoserine: Ser-43, Ser-84, and Ser-123. Disordered regions lie at residues 210-229, 236-287, 390-414, and 453-481; these read DGNH…GDLA, TRDS…GSKS, AKED…AEPP, and SVLS…TQGC.

This is an uncharacterized protein from Mus musculus (Mouse).